A 298-amino-acid chain; its full sequence is tRNA dimethylallyltransferase (298 aa).

ATP is bound at residue 10–17; the sequence is GATATGKS. 12-17 provides a ligand contact to substrate; that stretch reads TATGKS. The interval 35–38 is interaction with substrate tRNA; it reads DSRQ.

The protein belongs to the IPP transferase family. Monomer. Mg(2+) is required as a cofactor.

The catalysed reaction is adenosine(37) in tRNA + dimethylallyl diphosphate = N(6)-dimethylallyladenosine(37) in tRNA + diphosphate. Its function is as follows. Catalyzes the transfer of a dimethylallyl group onto the adenine at position 37 in tRNAs that read codons beginning with uridine, leading to the formation of N6-(dimethylallyl)adenosine (i(6)A). This is tRNA dimethylallyltransferase from Picosynechococcus sp. (strain ATCC 27264 / PCC 7002 / PR-6) (Agmenellum quadruplicatum).